We begin with the raw amino-acid sequence, 152 residues long: Deoxyuridine 5'-triphosphate nucleotidohydrolase (152 aa).

Residues 71–73 (RSG), asparagine 84, 88–90 (LID), and methionine 98 each bind substrate.

It belongs to the dUTPase family. Mg(2+) is required as a cofactor.

The catalysed reaction is dUTP + H2O = dUMP + diphosphate + H(+). It participates in pyrimidine metabolism; dUMP biosynthesis; dUMP from dCTP (dUTP route): step 2/2. This enzyme is involved in nucleotide metabolism: it produces dUMP, the immediate precursor of thymidine nucleotides and it decreases the intracellular concentration of dUTP so that uracil cannot be incorporated into DNA. The sequence is that of Deoxyuridine 5'-triphosphate nucleotidohydrolase from Cronobacter sakazakii (strain ATCC BAA-894) (Enterobacter sakazakii).